We begin with the raw amino-acid sequence, 137 residues long: uncharacterized protein (137 aa).

4 helical membrane passes run 20–39, 44–61, 86–105, and 109–131; these read YGKI…GYAV, WFIT…LSLV, VEIF…ALDL, and AALA…YGYY.

The protein resides in the cell membrane. This is an uncharacterized protein from Archaeoglobus fulgidus (strain ATCC 49558 / DSM 4304 / JCM 9628 / NBRC 100126 / VC-16).